Reading from the N-terminus, the 515-residue chain is 2-isopropylmalate synthase (515 aa).

In terms of domain architecture, Pyruvate carboxyltransferase spans 5-267 (VIIFDTTLRD…HTGLDHKEIH (263 aa)). The Mn(2+) site is built by D14, H202, H204, and N238. The tract at residues 392–515 (KLNYLSVQSG…EMKQQKFATV (124 aa)) is regulatory domain.

Belongs to the alpha-IPM synthase/homocitrate synthase family. LeuA type 1 subfamily. In terms of assembly, homodimer. Requires Mn(2+) as cofactor.

The protein localises to the cytoplasm. The catalysed reaction is 3-methyl-2-oxobutanoate + acetyl-CoA + H2O = (2S)-2-isopropylmalate + CoA + H(+). Its pathway is amino-acid biosynthesis; L-leucine biosynthesis; L-leucine from 3-methyl-2-oxobutanoate: step 1/4. In terms of biological role, catalyzes the condensation of the acetyl group of acetyl-CoA with 3-methyl-2-oxobutanoate (2-ketoisovalerate) to form 3-carboxy-3-hydroxy-4-methylpentanoate (2-isopropylmalate). This chain is 2-isopropylmalate synthase, found in Vibrio atlanticus (strain LGP32) (Vibrio splendidus (strain Mel32)).